Here is a 336-residue protein sequence, read N- to C-terminus: Inositol 2-dehydrogenase (336 aa).

Belongs to the Gfo/Idh/MocA family. In terms of assembly, homotetramer.

It carries out the reaction myo-inositol + NAD(+) = scyllo-inosose + NADH + H(+). Involved in the oxidation of myo-inositol (MI) to 2-keto-myo-inositol (2KMI or 2-inosose). This Paracoccus denitrificans (strain Pd 1222) protein is Inositol 2-dehydrogenase.